We begin with the raw amino-acid sequence, 132 residues long: Transmembrane protein C1orf162 homolog (132 aa).

The chain crosses the membrane as a helical span at residues 36–56 (IILAFFAGVLLTLLIVALIFL). The segment at 95–132 (TFKPPEENSNDLTRNHSSGLEPTIYSQIKVTDSDLPLP) is disordered. The segment covering 104–124 (NDLTRNHSSGLEPTIYSQIKV) has biased composition (polar residues). Ser-111 carries the phosphoserine modification.

It is found in the membrane. The sequence is that of Transmembrane protein C1orf162 homolog from Mus musculus (Mouse).